A 297-amino-acid chain; its full sequence is ER membrane protein complex subunit 2 (297 aa).

Residue Ala-2 is modified to N-acetylalanine. TPR repeat units follow at residues 87 to 120 (HRVKRLTGMRFEAMERYDDAIQLYDRILQEDPTN), 155 to 188 (QEAWHELAELYINEHDYAKAAFCLEELMMTNPHN), and 192 to 225 (CQQYAEVKYTQGGLENLELSRKYFAQALKLNNRN). Lys-255 carries the N6-acetyllysine modification.

The protein belongs to the EMC2 family. Component of the ER membrane protein complex (EMC). Interacts with WNK1 (via amphipathic alpha-helix region); promoting the ER membrane protein complex assembly by preventing EMC2 ubiquitination. Post-translationally, ubiquitinated when soluble in the cytoplasm, leading to its degradation by the proteasome. Interaction with EMC2 prevents its ubiquitination and degradation.

The protein localises to the endoplasmic reticulum membrane. Functionally, part of the endoplasmic reticulum membrane protein complex (EMC) that enables the energy-independent insertion into endoplasmic reticulum membranes of newly synthesized membrane proteins. Preferentially accommodates proteins with transmembrane domains that are weakly hydrophobic or contain destabilizing features such as charged and aromatic residues. Involved in the cotranslational insertion of multi-pass membrane proteins in which stop-transfer membrane-anchor sequences become ER membrane spanning helices. It is also required for the post-translational insertion of tail-anchored/TA proteins in endoplasmic reticulum membranes. By mediating the proper cotranslational insertion of N-terminal transmembrane domains in an N-exo topology, with translocated N-terminus in the lumen of the ER, controls the topology of multi-pass membrane proteins like the G protein-coupled receptors. By regulating the insertion of various proteins in membranes, it is indirectly involved in many cellular processes. This chain is ER membrane protein complex subunit 2, found in Pongo abelii (Sumatran orangutan).